The primary structure comprises 626 residues: Deoxynucleoside triphosphate triphosphohydrolase SAMHD1 (626 aa).

At Met-1 the chain carries N-acetylmethionine. A compositionally biased stretch (basic and acidic residues) spans 1-19 (MQRADSEQPSKRPRCDDSP). The interval 1–36 (MQRADSEQPSKRPRCDDSPRTPSNTPSAEADWSPGL) is disordered. The residue at position 18 (Ser-18) is a Phosphoserine. Residues Thr-21 and Thr-25 each carry the phosphothreonine modification. Residues Ser-33 and Ser-93 each carry the phosphoserine modification. In terms of domain architecture, SAM spans 45–110 (WGPEQVCSFL…LSYIQRLVQI (66 aa)). Positions 116 and 117 each coordinate GTP. A dATP-binding site is contributed by Asn-119. Asn-119 lines the dCTP pocket. Position 119 (Asn-119) interacts with dGTP. Residue Asn-119 coordinates dTTP. Residues Asp-137, Gln-142, and Arg-145 each contribute to the GTP site. Gln-149 contacts dATP. Gln-149 contributes to the dCTP binding site. DGTP is bound by residues Gln-149, Leu-150, Val-156, and Arg-164. Gln-149 is a binding site for dTTP. DATP contacts are provided by Val-156 and Arg-164. Residues Val-156 and Arg-164 each contribute to the dCTP site. Val-156 and Arg-164 together coordinate dTTP. Residues 164–316 (RFEHSLGVGY…GIDVDKWDYF (153 aa)) form the HD domain. Mn(2+)-binding residues include His-167, His-206, and Asp-207. DATP-binding residues include His-210 and His-215. DCTP is bound by residues His-210 and His-215. DTTP-binding residues include His-210 and His-215. His-233 is a catalytic residue. Asp-311 lines the Mn(2+) pocket. DATP is bound by residues Lys-312, Tyr-315, Asp-319, Arg-333, Arg-352, Lys-354, Asn-358, and Arg-366. DCTP is bound by residues Lys-312, Tyr-315, Asp-319, Arg-333, Arg-352, and Lys-354. DGTP is bound by residues Lys-312, Tyr-315, Asp-319, Arg-333, Arg-352, Lys-354, Asn-358, and Arg-366. 6 residues coordinate dTTP: Lys-312, Tyr-315, Asp-319, Arg-333, Arg-352, and Lys-354. The dCTP site is built by Arg-366 and Arg-372. DGTP contacts are provided by Tyr-374, Gln-375, His-376, and Lys-377. 3 residues coordinate dATP: Gln-375, His-376, and Lys-377. DCTP is bound by residues Gln-375, His-376, and Lys-377. The dTTP site is built by Gln-375, His-376, and Lys-377. Arg-451 and Lys-455 together coordinate GTP. Glycyl lysine isopeptide (Lys-Gly) (interchain with G-Cter in SUMO2) cross-links involve residues Lys-467, Lys-469, and Lys-492. Lys-523 is a binding site for GTP. Residue Lys-523 coordinates dATP. Lys-523 is a dCTP binding site. Lys-523 is a binding site for dGTP. Residue Lys-523 coordinates dTTP. (Microbial infection) Phosphothreonine is present on Thr-592. Thr-592 carries the phosphothreonine; by CDK1 modification. A Glycyl lysine isopeptide (Lys-Gly) (interchain with G-Cter in SUMO2) cross-link involves residue Lys-622.

The protein belongs to the SAMHD1 family. In terms of assembly, homodimer; in absence of GTP and dNTP. Homotetramer; in GTP- and dNTP-bound form. Interacts with MRE11; leading to stimulate the exonuclease activity of MRE11. Interacts with RBBP8/CtIP. Interacts (via its C-terminus) with CD81. As to quaternary structure, (Microbial infection) Interacts with HIV-2 viral protein Vpx; promoting interaction with a E3 ubiquitin-protein ligase complex containing DCAF1, leading to subsequent ubiquitination and degradation of SAMHD1. Mn(2+) is required as a cofactor. In terms of processing, phosphorylation at Thr-592 by CDK1 acts as a switch to control deoxynucleoside triphosphate (dNTPase)-dependent and -independent functions. Phosphorylation at Thr-592 takes place in cycling cells: it reduces the stability of the homotetramer, impairing the dNTPase activity and subsequent ability to restrict infection by viruses. It also inhibits ability to suppress LINE-1 retrotransposon activity. In contrast, phosphorylation at Thr-592 promotes DNA end resection at stalled replication forks in response to DNA damage. Post-translationally, (Microbial infection) Phosphorylation at Thr-592 by Epstein-Barr virus kinase BGLF4 and human cytomegalovirus/HCMV UL97 leads to a reduced level of dCTPase and dTTPase activity and the loss of viral restriction. (Microbial infection) Ubiquitinated following interaction with HIV-2 viral protein Vpx; Vpx promotes interaction and with a DCX (DDB1-CUL4-X-box) E3 ubiquitin ligase, leading to proteasomal degradation. Expressed in heart, skeletal muscle, spleen, liver, small intestine, placenta, lung and peripheral blood leukocytes. No expression is seen in brain and thymus.

It is found in the nucleus. The protein resides in the chromosome. It carries out the reaction a 2'-deoxyribonucleoside 5'-triphosphate + H2O = a 2'-deoxyribonucleoside + triphosphate + H(+). It catalyses the reaction dATP + H2O = 2'-deoxyadenosine + triphosphate + H(+). The catalysed reaction is dCTP + H2O = 2'-deoxycytidine + triphosphate + H(+). The enzyme catalyses dGTP + H2O = 2'-deoxyguanosine + triphosphate + H(+). It carries out the reaction dTTP + H2O = thymidine + triphosphate + H(+). Its activity is regulated as follows. Allosterically activated and regulated via the combined actions of GTP and dNTPs (dATP, dGTP, dTTP and dCTP): Allosteric site 1 binds GTP, while allosteric site 2 binds dNTP. Allosteric activation promotes the formation of highly active homotetramers. Phosphorylation at Thr-592 impairs homotetramerization, thereby inhibiting dNTPase activity, leading to reduced ability to restrict infection by viruses. Its function is as follows. Protein that acts both as a host restriction factor involved in defense response to virus and as a regulator of DNA end resection at stalled replication forks. Has deoxynucleoside triphosphate (dNTPase) activity, which is required to restrict infection by viruses, such as HIV-1: dNTPase activity reduces cellular dNTP levels to levels too low for retroviral reverse transcription to occur, blocking early-stage virus replication in dendritic and other myeloid cells. Likewise, suppresses LINE-1 retrotransposon activity. Not able to restrict infection by HIV-2 virus; because restriction activity is counteracted by HIV-2 viral protein Vpx. In addition to virus restriction, dNTPase activity acts as a regulator of DNA precursor pools by regulating dNTP pools. Phosphorylation at Thr-592 acts as a switch to control dNTPase-dependent and -independent functions: it inhibits dNTPase activity and ability to restrict infection by viruses, while it promotes DNA end resection at stalled replication forks. Functions during S phase at stalled DNA replication forks to promote the resection of gapped or reversed forks: acts by stimulating the exonuclease activity of MRE11, activating the ATR-CHK1 pathway and allowing the forks to restart replication. Its ability to promote degradation of nascent DNA at stalled replication forks is required to prevent induction of type I interferons, thereby preventing chronic inflammation. Ability to promote DNA end resection at stalled replication forks is independent of dNTPase activity. Enhances immunoglobulin hypermutation in B-lymphocytes by promoting transversion mutation. The polypeptide is Deoxynucleoside triphosphate triphosphohydrolase SAMHD1 (Homo sapiens (Human)).